Consider the following 1164-residue polypeptide: Phospholipid-transporting ATPase IA (1164 aa).

The Cytoplasmic portion of the chain corresponds to 1-75 (MPTMRRTVSE…PRFLYSQFRR (75 aa)). A Phosphoserine modification is found at S25. At T28 the chain carries Phosphothreonine. S29 bears the Phosphoserine mark. A helical membrane pass occupies residues 76–96 (AANSFFLFIALLQQIPDVSPT). Over 97 to 100 (GRYT) the chain is Exoplasmic loop. A helical membrane pass occupies residues 101–121 (TLVPLLFILAVAAIKEIIEDI). Topologically, residues 122-297 (KRHKADNAVN…SNVERITNVQ (176 aa)) are cytoplasmic. Residues 298-318 (ILILFCILIAMSLVCSVGSAI) traverse the membrane as a helical segment. Residues 319–339 (WNRRHSGKDWYLHLHYGGASN) are Exoplasmic loop-facing. Residues 340–360 (FGLNFLTFIILFNNLIPISLL) form a helical membrane-spanning segment. The Cytoplasmic segment spans residues 361–866 (VTLEVVKFTQ…KCILYCFYKN (506 aa)). D409 acts as the 4-aspartylphosphate intermediate in catalysis. Residues D409, K410, and T411 each contribute to the ATP site. D409 is a Mg(2+) binding site. Residue T411 participates in Mg(2+) binding. A Phosphoserine modification is found at S443. ATP-binding positions include E508, F549, K572, R605, T685, G686, D687, 741–748 (ALIIDGKT), R775, and K781. D801 contributes to the Mg(2+) binding site. The ATP site is built by N804 and D805. D805 serves as a coordination point for Mg(2+). Residues 867–887 (IVLYIIEIWFAFVNGFSGQIL) traverse the membrane as a helical segment. At 888–890 (FER) the chain is on the exoplasmic loop side. Residues 891–911 (WCIGLYNVMFTAMPPLTLGIF) traverse the membrane as a helical segment. At 912-939 (ERSCRKENMLKYPELYKTSQNALDFNTK) the chain is on the cytoplasmic side. The helical transmembrane segment at 940–960 (VFWVHCLNGLFHSVILFWFPL) threads the bilayer. Topologically, residues 961–977 (KALQYGTVFGNGKTSDY) are exoplasmic loop. The helical transmembrane segment at 978–998 (LLLGNFVYTFVVITVCLKAGL) threads the bilayer. The Cytoplasmic segment spans residues 999–1008 (ETSYWTWFSH). The helical transmembrane segment at 1009 to 1029 (IAIWGSIALWVVFFGIYSSLW) threads the bilayer. Residues 1030-1044 (PAVPMAPDMSGEAAM) lie on the Exoplasmic loop side of the membrane. Residues 1045-1065 (LFSSGVFWVGLLSIPVASLLL) traverse the membrane as a helical segment. At 1066-1164 (DVLYKVIKRT…DTTKQRPDEW (99 aa)) the chain is on the cytoplasmic side. 1095 to 1102 (GAVVLGKS) is a binding site for ATP. A Phosphoserine modification is found at S1126.

Belongs to the cation transport ATPase (P-type) (TC 3.A.3) family. Type IV subfamily. In terms of assembly, component of a P4-ATPase flippase complex which consists of a catalytic alpha subunit and an accessory beta subunit. Interacts with TMEM30A to form a flippase complex; this complex forms an intermediate phosphoenzyme. Interacts with TMEM30B; this interaction is reported conflictingly. It depends on Mg(2+) as a cofactor. Cleaved by calpain in a caspase- and calcium influx-dependent manner only during platelet apoptosis and may lead to inactivation. In terms of tissue distribution, found in most tissues except liver and testis. Most abundant in brain and lung. Also detected in fetal tissues. Isoform 1 is expressed in brain. Isoform 2 and isoform 3 are expressed in reticulocytes. Expressed in mouse hippocampus in both dentate gyrus (DG) and the CA3 regions. Expressed in both neuronal as well as non-neuronal cells within the DG. Highly expressed in platelets.

It localises to the cytoplasmic vesicle. It is found in the secretory vesicle. Its subcellular location is the chromaffin granule membrane. The protein resides in the cytoplasmic granule. The protein localises to the cell membrane. It localises to the endoplasmic reticulum. It is found in the golgi apparatus. Its subcellular location is the endomembrane system. The catalysed reaction is ATP + H2O + phospholipidSide 1 = ADP + phosphate + phospholipidSide 2.. It catalyses the reaction a 1,2-diacyl-sn-glycero-3-phospho-L-serine(out) + ATP + H2O = a 1,2-diacyl-sn-glycero-3-phospho-L-serine(in) + ADP + phosphate + H(+). With respect to regulation, ATPase activity is stimulated by phosphatidylserine (PS) and minimally by phosphatidylethanolamine (PE). ATPase activity is inhibited by the vanadate and by the presence of calcium. In terms of biological role, catalytic component of a P4-ATPase flippase complex which catalyzes the hydrolysis of ATP coupled to the transport of aminophospholipids from the outer to the inner leaflet of various membranes and ensures the maintenance of asymmetric distribution of phospholipids. Phospholipid translocation also seems to be implicated in vesicle formation and in uptake of lipid signaling molecules. In vitro, its ATPase activity is selectively and stereospecifically stimulated by phosphatidylserine (PS). The flippase complex ATP8A1:TMEM30A seems to play a role in regulation of cell migration probably involving flippase-mediated translocation of phosphatidylethanolamine (PE) at the cell membrane. Acts as aminophospholipid translocase at the cell membrane in neuronal cells; the activity is associated with hippocampus-dependent learning. May play a role in brain connectivity. This is Phospholipid-transporting ATPase IA from Mus musculus (Mouse).